Consider the following 35-residue polypeptide: Photosystem II reaction center protein T (35 aa).

A helical transmembrane segment spans residues A3–F23.

It belongs to the PsbT family. In terms of assembly, PSII is composed of 1 copy each of membrane proteins PsbA, PsbB, PsbC, PsbD, PsbE, PsbF, PsbH, PsbI, PsbJ, PsbK, PsbL, PsbM, PsbT, PsbY, PsbZ, Psb30/Ycf12, at least 3 peripheral proteins of the oxygen-evolving complex and a large number of cofactors. It forms dimeric complexes.

Its subcellular location is the plastid. It is found in the chloroplast thylakoid membrane. In terms of biological role, found at the monomer-monomer interface of the photosystem II (PS II) dimer, plays a role in assembly and dimerization of PSII. PSII is a light-driven water plastoquinone oxidoreductase, using light energy to abstract electrons from H(2)O, generating a proton gradient subsequently used for ATP formation. The protein is Photosystem II reaction center protein T of Cunninghamia lanceolata (China fir).